The sequence spans 80 residues: Small ribosomal subunit protein bS16 (80 aa).

This sequence belongs to the bacterial ribosomal protein bS16 family.

The sequence is that of Small ribosomal subunit protein bS16 from Wigglesworthia glossinidia brevipalpis.